Reading from the N-terminus, the 1755-residue chain is Transposon Ty1-JR2 Gag-Pol polyprotein (1755 aa).

A compositionally biased stretch (low complexity) spans M1–S16. Disordered regions lie at residues M1 to Q93, P126 to P173, and G352 to T421. Polar residues-rich tracts occupy residues T48–S60, S71–Q93, and Q127–F152. A compositionally biased stretch (low complexity) spans T153 to T165. The RNA-binding stretch occupies residues N299 to H401. A compositionally biased stretch (low complexity) spans N402–S418. S416 is modified (phosphoserine). The active-site For protease activity; shared with dimeric partner is D461. The interval N583 to C640 is integrase-type zinc finger-like. In terms of domain architecture, Integrase catalytic spans N660–P835. The Mg(2+) site is built by D671 and D736. Disordered regions lie at residues S956–K1087, R1092–P1111, and D1130–E1186. The span at S960–T969 shows a compositional bias: low complexity. Positions S1005–T1015 are enriched in polar residues. The segment covering E1038 to S1053 has biased composition (basic and acidic residues). 2 stretches are compositionally biased toward polar residues: residues Y1054–D1082 and P1101–P1111. Residues K1178 to R1212 carry the Bipartite nuclear localization signal motif. Residues N1338–Q1476 enclose the Reverse transcriptase Ty1/copia-type domain. 6 residues coordinate Mg(2+): D1346, D1427, D1428, D1610, E1652, and D1685. Residues D1610–K1752 form the RNase H Ty1/copia-type domain.

As to quaternary structure, the capsid protein forms a homotrimer, from which the VLPs are assembled. The protease is a homodimer, whose active site consists of two apposed aspartic acid residues. In terms of processing, initially, virus-like particles (VLPs) are composed of the structural unprocessed proteins Gag and Gag-Pol, and also contain the host initiator methionine tRNA (tRNA(i)-Met) which serves as a primer for minus-strand DNA synthesis, and a dimer of genomic Ty RNA. Processing of the polyproteins occurs within the particle and proceeds by an ordered pathway, called maturation. First, the protease (PR) is released by autocatalytic cleavage of the Gag-Pol polyprotein yielding capsid protein p45 and a Pol-p154 precursor protein. This cleavage is a prerequisite for subsequent processing of Pol-p154 at the remaining sites to release the mature structural and catalytic proteins. Maturation takes place prior to the RT reaction and is required to produce transposition-competent VLPs.

It is found in the cytoplasm. The protein localises to the nucleus. The enzyme catalyses DNA(n) + a 2'-deoxyribonucleoside 5'-triphosphate = DNA(n+1) + diphosphate. It catalyses the reaction Endonucleolytic cleavage to 5'-phosphomonoester.. Functionally, capsid protein (CA) is the structural component of the virus-like particle (VLP), forming the shell that encapsulates the retrotransposons dimeric RNA genome. The particles are assembled from trimer-clustered units and there are holes in the capsid shells that allow for the diffusion of macromolecules. CA also has nucleocapsid-like chaperone activity, promoting primer tRNA(i)-Met annealing to the multipartite primer-binding site (PBS), dimerization of Ty1 RNA and initiation of reverse transcription. In terms of biological role, the aspartyl protease (PR) mediates the proteolytic cleavages of the Gag and Gag-Pol polyproteins after assembly of the VLP. Reverse transcriptase/ribonuclease H (RT) is a multifunctional enzyme that catalyzes the conversion of the retro-elements RNA genome into dsDNA within the VLP. The enzyme displays a DNA polymerase activity that can copy either DNA or RNA templates, and a ribonuclease H (RNase H) activity that cleaves the RNA strand of RNA-DNA heteroduplexes during plus-strand synthesis and hydrolyzes RNA primers. The conversion leads to a linear dsDNA copy of the retrotransposon that includes long terminal repeats (LTRs) at both ends. Its function is as follows. Integrase (IN) targets the VLP to the nucleus, where a subparticle preintegration complex (PIC) containing at least integrase and the newly synthesized dsDNA copy of the retrotransposon must transit the nuclear membrane. Once in the nucleus, integrase performs the integration of the dsDNA into the host genome. The chain is Transposon Ty1-JR2 Gag-Pol polyprotein (TY1B-JR2) from Saccharomyces cerevisiae (strain ATCC 204508 / S288c) (Baker's yeast).